The chain runs to 130 residues: Small ribosomal subunit protein uS9 (130 aa).

This sequence belongs to the universal ribosomal protein uS9 family.

The polypeptide is Small ribosomal subunit protein uS9 (Enterococcus faecalis (strain ATCC 700802 / V583)).